The chain runs to 1132 residues: Tyrosine-protein kinase JAK2 (1132 aa).

The interaction with cytokine/interferon/growth hormone receptors stretch occupies residues 1-239 (MGMACLTMTE…RYRFRRFIQQ (239 aa)). One can recognise an FERM domain in the interval 37–380 (PVLLVYLYHS…GYYRLTADAH (344 aa)). Tyr119 is modified (phosphotyrosine; by autocatalysis). 2 positions are modified to phosphotyrosine: Tyr372 and Tyr373. The SH2; atypical domain occupies 401–482 (HGPISMDFAI…SLKDLLNCYQ (82 aa)). Phosphoserine is present on Ser523. A Protein kinase 1 domain is found at 545–809 (LIFNESLGQG…AIIRDLNSLF (265 aa)). Residues Tyr570 and Tyr813 each carry the phosphotyrosine modification. The Protein kinase 2 domain occupies 849-1126 (LKFLQQLGKG…RDLALRVDQI (278 aa)). Residue 855–863 (LGKGNFGSV) coordinates ATP. Tyr868 is modified (phosphotyrosine; by autocatalysis). Lys882 provides a ligand contact to ATP. Residues Tyr966 and Tyr972 each carry the phosphotyrosine; by autocatalysis modification. Asp976 serves as the catalytic Proton acceptor. Phosphotyrosine; by autocatalysis is present on residues Tyr1007 and Tyr1008.

Belongs to the protein kinase superfamily. Tyr protein kinase family. JAK subfamily. In terms of assembly, interacts with IL23R, SKB1 and STAM2. Interacts with EPOR. Interacts with LYN. Interacts with SIRPA. Interacts with SH2B1. Interacts with TEC. Interacts with IFNGR2 (via intracellular domain). Interacts with LEPR (Isoform B). Interacts with HSP90AB1; promotes functional activation in a heat shock-dependent manner. Interacts with STRA6. Interacts with RHEX; this interaction occurs in a erythropoietin (EPO)-dependent manner. Interacts with ASB2; the interaction targets JAK2 for Notch-induced proteasomal degradation. It depends on Mg(2+) as a cofactor. Post-translationally, autophosphorylated, leading to regulate its activity. Leptin promotes phosphorylation on tyrosine residues, including phosphorylation on Tyr-813. Autophosphorylation on Tyr-119 in response to EPO down-regulates its kinase activity. Autophosphorylation on Tyr-868, Tyr-966 and Tyr-972 in response to growth hormone (GH) are required for maximal kinase activity. Also phosphorylated by TEC. Phosphorylated on tyrosine residues in response to interferon gamma signaling. Phosphorylated on tyrosine residues in response to a signaling cascade that is activated by increased cellular retinol. Undergoes Notch-induced ubiquitination and subsequent proteasomal degradation which is mediated by ASB1 or ASB2, the substrate-recognition components of probable ECS E3 ubiquitin-protein ligase complexes.

The protein resides in the endomembrane system. It localises to the cytoplasm. It is found in the nucleus. The catalysed reaction is L-tyrosyl-[protein] + ATP = O-phospho-L-tyrosyl-[protein] + ADP + H(+). Regulated by autophosphorylation, can both activate or decrease activity. Heme regulates its activity by enhancing the phosphorylation on Tyr-1007 and Tyr-1008. Functionally, non-receptor tyrosine kinase involved in various processes such as cell growth, development, differentiation or histone modifications. Mediates essential signaling events in both innate and adaptive immunity. In the cytoplasm, plays a pivotal role in signal transduction via its association with type I receptors such as growth hormone (GHR), prolactin (PRLR), leptin (LEPR), erythropoietin (EPOR), thrombopoietin (THPO); or type II receptors including IFN-alpha, IFN-beta, IFN-gamma and multiple interleukins. Following ligand-binding to cell surface receptors, phosphorylates specific tyrosine residues on the cytoplasmic tails of the receptor, creating docking sites for STATs proteins. Subsequently, phosphorylates the STATs proteins once they are recruited to the receptor. Phosphorylated STATs then form homodimer or heterodimers and translocate to the nucleus to activate gene transcription. For example, cell stimulation with erythropoietin (EPO) during erythropoiesis leads to JAK2 autophosphorylation, activation, and its association with erythropoietin receptor (EPOR) that becomes phosphorylated in its cytoplasmic domain. Then, STAT5 (STAT5A or STAT5B) is recruited, phosphorylated and activated by JAK2. Once activated, dimerized STAT5 translocates into the nucleus and promotes the transcription of several essential genes involved in the modulation of erythropoiesis. Part of a signaling cascade that is activated by increased cellular retinol and that leads to the activation of STAT5 (STAT5A or STAT5B). In addition, JAK2 mediates angiotensin-2-induced ARHGEF1 phosphorylation. Plays a role in cell cycle by phosphorylating CDKN1B. Cooperates with TEC through reciprocal phosphorylation to mediate cytokine-driven activation of FOS transcription. In the nucleus, plays a key role in chromatin by specifically mediating phosphorylation of 'Tyr-41' of histone H3 (H3Y41ph), a specific tag that promotes exclusion of CBX5 (HP1 alpha) from chromatin. Up-regulates the potassium voltage-gated channel activity of KCNA3. The chain is Tyrosine-protein kinase JAK2 from Pongo abelii (Sumatran orangutan).